Reading from the N-terminus, the 320-residue chain is Quinolinate synthase (320 aa).

The iminosuccinate site is built by histidine 34 and serine 51. Residue cysteine 96 participates in [4Fe-4S] cluster binding. Iminosuccinate is bound by residues 122–124 (YIN) and serine 139. Cysteine 182 lines the [4Fe-4S] cluster pocket. Iminosuccinate contacts are provided by residues 208–210 (HPE) and threonine 225. A [4Fe-4S] cluster-binding site is contributed by cysteine 276.

Belongs to the quinolinate synthase family. Type 2 subfamily. The cofactor is [4Fe-4S] cluster.

The protein localises to the cytoplasm. The catalysed reaction is iminosuccinate + dihydroxyacetone phosphate = quinolinate + phosphate + 2 H2O + H(+). It functions in the pathway cofactor biosynthesis; NAD(+) biosynthesis; quinolinate from iminoaspartate: step 1/1. Its function is as follows. Catalyzes the condensation of iminoaspartate with dihydroxyacetone phosphate to form quinolinate. This Synechococcus sp. (strain ATCC 27144 / PCC 6301 / SAUG 1402/1) (Anacystis nidulans) protein is Quinolinate synthase.